A 623-amino-acid chain; its full sequence is Chaperone protein HtpG (623 aa).

Positions 1–341 are a; substrate-binding; sequence MEKREFKAES…SQDLSLNISR (341 aa). Residues 342–549 are b; sequence EMLQHDRQLS…EGEVSIEMEK (208 aa). A c region spans residues 550–623; the sequence is ILSAMPNNQG…FTNDICKLMK (74 aa).

Belongs to the heat shock protein 90 family. In terms of assembly, homodimer.

The protein resides in the cytoplasm. Molecular chaperone. Has ATPase activity. In Clostridium perfringens (strain 13 / Type A), this protein is Chaperone protein HtpG.